A 185-amino-acid polypeptide reads, in one-letter code: UPF0397 protein LBA0922 (185 aa).

The next 5 membrane-spanning stretches (helical) occupy residues 11–31 (VVAI…TSIP), 45–65 (FLAF…GFIG), 72–92 (IMYG…GWII), 111–131 (IILF…VVAP), and 146–166 (FVQG…IGTI).

Belongs to the UPF0397 family.

It localises to the cell membrane. This Lactobacillus acidophilus (strain ATCC 700396 / NCK56 / N2 / NCFM) protein is UPF0397 protein LBA0922.